Consider the following 203-residue polypeptide: GTP cyclohydrolase-2 (203 aa).

GTP is bound at residue Arg-49 to Glu-53. Residues Cys-54, Cys-65, and Cys-67 each coordinate Zn(2+). Residues Gln-70, Glu-92–Arg-94, and Thr-114 each bind GTP. The Proton acceptor role is filled by Asp-126. Residue Arg-128 is the Nucleophile of the active site. GTP contacts are provided by Thr-149 and Lys-154.

Belongs to the GTP cyclohydrolase II family. Zn(2+) serves as cofactor.

The enzyme catalyses GTP + 4 H2O = 2,5-diamino-6-hydroxy-4-(5-phosphoribosylamino)-pyrimidine + formate + 2 phosphate + 3 H(+). Its pathway is cofactor biosynthesis; riboflavin biosynthesis; 5-amino-6-(D-ribitylamino)uracil from GTP: step 1/4. In terms of biological role, catalyzes the conversion of GTP to 2,5-diamino-6-ribosylamino-4(3H)-pyrimidinone 5'-phosphate (DARP), formate and pyrophosphate. The polypeptide is GTP cyclohydrolase-2 (Shewanella sp. (strain ANA-3)).